The chain runs to 80 residues: MKTGVKKLKVHVKKNDMVTVISGNDKGKSGKVLRVYPVKGRVIVEGVNIRKRHMRPTQSSPQGQIIEREFPVHASNVKKG.

It belongs to the universal ribosomal protein uL24 family. In terms of assembly, part of the 50S ribosomal subunit.

Its function is as follows. One of two assembly initiator proteins, it binds directly to the 5'-end of the 23S rRNA, where it nucleates assembly of the 50S subunit. One of the proteins that surrounds the polypeptide exit tunnel on the outside of the subunit. This chain is Large ribosomal subunit protein uL24, found in Chlorobium phaeovibrioides (strain DSM 265 / 1930) (Prosthecochloris vibrioformis (strain DSM 265)).